A 98-amino-acid polypeptide reads, in one-letter code: NADH-ubiquinone oxidoreductase chain 4L (98 aa).

Helical transmembrane passes span 1 to 21 (MSMV…GLLM), 29 to 49 (SLLC…LMIL), and 61 to 81 (IILL…LVMI).

It belongs to the complex I subunit 4L family. Core subunit of respiratory chain NADH dehydrogenase (Complex I) which is composed of 45 different subunits.

It localises to the mitochondrion inner membrane. The catalysed reaction is a ubiquinone + NADH + 5 H(+)(in) = a ubiquinol + NAD(+) + 4 H(+)(out). Its function is as follows. Core subunit of the mitochondrial membrane respiratory chain NADH dehydrogenase (Complex I) which catalyzes electron transfer from NADH through the respiratory chain, using ubiquinone as an electron acceptor. Part of the enzyme membrane arm which is embedded in the lipid bilayer and involved in proton translocation. This chain is NADH-ubiquinone oxidoreductase chain 4L (MT-ND4L), found in Vicugna pacos (Alpaca).